We begin with the raw amino-acid sequence, 782 residues long: Coiled-coil alpha-helical rod protein 1 (782 aa).

Basic and acidic residues-rich tracts occupy residues 62-74 (ERDV…EPGR) and 208-218 (ETRRAGEAKEL). Disordered stretches follow at residues 62 to 82 (ERDV…WGLE) and 177 to 218 (EQLS…AKEL). 3 coiled-coil regions span residues 111–303 (LRET…SLTH), 344–437 (LMVQ…NAVS), and 498–691 (VTDV…QQEG).

As to expression, found in all tissues tested, abundantly expressed in heart, liver, skeletal muscle, kidney and pancreas, and to a lesser extent in lung and placenta. Overexpressed in keratinocytes of psoriatic lesions.

Its subcellular location is the cytoplasm. It is found in the nucleus. May be a regulator of keratinocyte proliferation or differentiation. This is Coiled-coil alpha-helical rod protein 1 (CCHCR1) from Homo sapiens (Human).